The chain runs to 154 residues: Myoglobin (154 aa).

In terms of domain architecture, Globin spans 2–148 (GLSDGEWQLV…FRKDMASNYK (147 aa)). S4 carries the post-translational modification Phosphoserine. Residue H65 participates in nitrite binding. H65 lines the O2 pocket. Residue T68 is modified to Phosphothreonine. H94 is a binding site for heme b.

Belongs to the globin family. As to quaternary structure, monomeric.

It is found in the cytoplasm. It localises to the sarcoplasm. The catalysed reaction is Fe(III)-heme b-[protein] + nitric oxide + H2O = Fe(II)-heme b-[protein] + nitrite + 2 H(+). It carries out the reaction H2O2 + AH2 = A + 2 H2O. Monomeric heme protein which primary function is to store oxygen and facilitate its diffusion within muscle tissues. Reversibly binds oxygen through a pentacoordinated heme iron and enables its timely and efficient release as needed during periods of heightened demand. Depending on the oxidative conditions of tissues and cells, and in addition to its ability to bind oxygen, it also has a nitrite reductase activity whereby it regulates the production of bioactive nitric oxide. Under stress conditions, like hypoxia and anoxia, it also protects cells against reactive oxygen species thanks to its pseudoperoxidase activity. This is Myoglobin (MB) from Pan troglodytes (Chimpanzee).